The primary structure comprises 315 residues: MGRWVNQSYTDGFFLLGIFSHSQTDLVLFSAVMVVFTVALCGNVLLIFLIYLDAGLHTPMYFFLSQLSLMDLMLVCNIVPKMAANFLSGRKSISFVGCGIQIGFFVSLVGSEGLLLGLMAYDRYVAVSHPLHYPILMNQRVCLQITGSSWAFGIIDGVIQMVAAMGLPYCGSRSVDHFFCEVQALLKLACADTSLFDTLLFACCVFMLLLPFSIIMASYACILGAVLRIRSAQAWKKALATCSSHLTAVTLFYGAAMFMYLRPRRYRAPSHDKVASIFYTVLTPMLNPLIYSLRNGEVMGALRKGLDRCRIGSQH.

At 1-31 the chain is on the extracellular side; that stretch reads MGRWVNQSYTDGFFLLGIFSHSQTDLVLFSA. Asparagine 6 carries an N-linked (GlcNAc...) asparagine glycan. Residues 32–52 traverse the membrane as a helical segment; sequence VMVVFTVALCGNVLLIFLIYL. Topologically, residues 53–58 are cytoplasmic; the sequence is DAGLHT. Residues 59-79 form a helical membrane-spanning segment; the sequence is PMYFFLSQLSLMDLMLVCNIV. At 80–99 the chain is on the extracellular side; that stretch reads PKMAANFLSGRKSISFVGCG. A disulfide bridge connects residues cysteine 98 and cysteine 180. A helical membrane pass occupies residues 100 to 120; sequence IQIGFFVSLVGSEGLLLGLMA. Residues 121-149 are Cytoplasmic-facing; it reads YDRYVAVSHPLHYPILMNQRVCLQITGSS. A helical membrane pass occupies residues 150–170; the sequence is WAFGIIDGVIQMVAAMGLPYC. Residues 171 to 198 lie on the Extracellular side of the membrane; that stretch reads GSRSVDHFFCEVQALLKLACADTSLFDT. A helical membrane pass occupies residues 199 to 219; that stretch reads LLFACCVFMLLLPFSIIMASY. Residues 220–238 are Cytoplasmic-facing; the sequence is ACILGAVLRIRSAQAWKKA. Residues 239-259 traverse the membrane as a helical segment; that stretch reads LATCSSHLTAVTLFYGAAMFM. The Extracellular portion of the chain corresponds to 260–272; that stretch reads YLRPRRYRAPSHD. A helical transmembrane segment spans residues 273-293; that stretch reads KVASIFYTVLTPMLNPLIYSL. At 294–315 the chain is on the cytoplasmic side; that stretch reads RNGEVMGALRKGLDRCRIGSQH.

It belongs to the G-protein coupled receptor 1 family.

It is found in the cell membrane. Functionally, odorant receptor. In Homo sapiens (Human), this protein is Olfactory receptor 2V1 (OR2V1).